Reading from the N-terminus, the 350-residue chain is Deoxyhypusine synthase-like protein (350 aa).

Belongs to the deoxyhypusine synthase family.

In Chlorobaculum tepidum (strain ATCC 49652 / DSM 12025 / NBRC 103806 / TLS) (Chlorobium tepidum), this protein is Deoxyhypusine synthase-like protein.